The primary structure comprises 438 residues: UDP-glycosyltransferase 84B2 (438 aa).

UDP-alpha-D-glucose is bound by residues serine 260, 314-316 (GQQ), 331-339 (HCGWNSTIE), and 353-356 (WIDQ).

It belongs to the UDP-glycosyltransferase family.

The sequence is that of UDP-glycosyltransferase 84B2 (UGT84B2) from Arabidopsis thaliana (Mouse-ear cress).